An 83-amino-acid polypeptide reads, in one-letter code: Calsensin (83 aa).

EF-hand domains lie at 4–39 (KVKA…LDAY) and 46–81 (KVKE…LLCQ). D17, N19, D21, Y23, E28, D59, N61, D63, K65, and E70 together coordinate Ca(2+).

Selectively expressed in a small group of neurons.

The protein localises to the cytoplasm. Functionally, may function as a trigger protein which interacts with a larger protein. May mediate calcium-dependent signal transduction events in the growth cones and axons of a small group of sensory neurons which fasciculate in a single axon tract. The protein is Calsensin of Haemopis marmorata (Green horse leech).